A 470-amino-acid chain; its full sequence is Putative multidrug resistance protein MdtD (470 aa).

Topologically, residues Met1–Gln11 are periplasmic. A helical membrane pass occupies residues Leu12–Ala32. At Leu33–His48 the chain is on the cytoplasmic side. Residues Met49–Ala69 form a helical membrane-spanning segment. At Asp70 to Asn76 the chain is on the periplasmic side. The helical transmembrane segment at Ile77–Thr97 threads the bilayer. Residues Leu98–Leu101 lie on the Cytoplasmic side of the membrane. The chain crosses the membrane as a helical span at residues Val102–Met124. The Periplasmic portion of the chain corresponds to Lys125 to Thr137. Residues Phe138–Val158 traverse the membrane as a helical segment. Residues Glu159 to His164 are Cytoplasmic-facing. The chain crosses the membrane as a helical span at residues Trp165–Met185. At Pro186–Asp196 the chain is on the periplasmic side. A helical membrane pass occupies residues Leu197 to Ser217. Topologically, residues Lys218–Pro224 are cytoplasmic. Residues Trp225–Ala245 form a helical membrane-spanning segment. The Periplasmic segment spans residues Lys246–Thr262. A helical transmembrane segment spans residues Phe263 to Met283. The Cytoplasmic portion of the chain corresponds to Thr284 to Pro285. Residues Val286 to Met306 form a helical membrane-spanning segment. Residues Val307–Ser341 lie on the Periplasmic side of the membrane. The chain crosses the membrane as a helical span at residues Leu342–Leu362. The Cytoplasmic portion of the chain corresponds to Gln363 to Ser395. The helical transmembrane segment at Met396–Phe416 threads the bilayer. The Periplasmic segment spans residues Gly417–His430. Residues Val431–Ala451 form a helical membrane-spanning segment. The Cytoplasmic portion of the chain corresponds to Arg452 to Leu470.

The protein belongs to the major facilitator superfamily. TCR/Tet family.

The protein localises to the cell inner membrane. In Salmonella agona (strain SL483), this protein is Putative multidrug resistance protein MdtD.